Here is a 66-residue protein sequence, read N- to C-terminus: Beta-mammal toxin Cv2 (66 aa).

Residues 1-66 (KEGYIVNHST…VWPLPKKTCN (66 aa)) enclose the LCN-type CS-alpha/beta domain. 4 disulfides stabilise this stretch: Cys-12-Cys-65, Cys-16-Cys-41, Cys-25-Cys-46, and Cys-29-Cys-48.

In terms of tissue distribution, expressed by the venom gland.

Its subcellular location is the secreted. Its activity is regulated as follows. Is susceptible to be slightly neutralized by human antibodies scFvs 10FG2. Its function is as follows. Beta toxins bind voltage-independently at site-4 of sodium channels (Nav) and reduces peak current and shifts the voltage of activation toward more negative potentials thereby affecting sodium channel activation and promoting spontaneous and repetitive firing. This toxin is slightly toxic to mice. In Centruroides villegasi (Scorpion), this protein is Beta-mammal toxin Cv2.